A 220-amino-acid polypeptide reads, in one-letter code: ATP synthase subunit 5, mitochondrial (220 aa).

The protein belongs to the ATPase delta chain family. In terms of assembly, F-type ATPases have 2 components, CF(1) - the catalytic core - and CF(0) - the membrane proton channel. CF(1) has five subunits: alpha(3), beta(3), gamma(1), delta(1), epsilon(1). CF(0) has three main subunits: a, b and c.

It localises to the mitochondrion. The protein resides in the mitochondrion inner membrane. Mitochondrial membrane ATP synthase (F(1)F(0) ATP synthase or Complex V) produces ATP from ADP in the presence of a proton gradient across the membrane which is generated by electron transport complexes of the respiratory chain. F-type ATPases consist of two structural domains, F(1) - containing the extramembraneous catalytic core and F(0) - containing the membrane proton channel, linked together by a central stalk and a peripheral stalk. During catalysis, ATP synthesis in the catalytic domain of F(1) is coupled via a rotary mechanism of the central stalk subunits to proton translocation. Part of the complex F(0) domain and the peripheric stalk, which acts as a stator to hold the catalytic alpha(3)beta(3) subcomplex and subunit a/ATP6 static relative to the rotary elements. In Neurospora crassa (strain ATCC 24698 / 74-OR23-1A / CBS 708.71 / DSM 1257 / FGSC 987), this protein is ATP synthase subunit 5, mitochondrial (atp-5).